Consider the following 433-residue polypeptide: sn-glycerol-3-phosphate-binding periplasmic protein UgpB (433 aa).

The N-terminal stretch at 1 to 25 is a signal peptide; that stretch reads MFTRLITTSALTGAIALTIGSQAFA. Tyrosine 67, aspartate 91, serine 146, serine 273, glycine 307, tyrosine 346, and arginine 397 together coordinate sn-glycerol 3-phosphate.

It belongs to the bacterial solute-binding protein 1 family. The complex is composed of two ATP-binding proteins (UgpC), two transmembrane proteins (UgpA and UgpE) and a solute-binding protein (UgpB).

The protein localises to the periplasm. Functionally, part of the ABC transporter complex UgpBAEC involved in sn-glycerol-3-phosphate (G3P) import. Binds G3P. In Brucella melitensis biotype 1 (strain ATCC 23456 / CCUG 17765 / NCTC 10094 / 16M), this protein is sn-glycerol-3-phosphate-binding periplasmic protein UgpB (ugpB).